We begin with the raw amino-acid sequence, 293 residues long: tRNA pseudouridine synthase B (293 aa).

Aspartate 39 acts as the Nucleophile in catalysis.

This sequence belongs to the pseudouridine synthase TruB family. Type 1 subfamily.

It catalyses the reaction uridine(55) in tRNA = pseudouridine(55) in tRNA. Responsible for synthesis of pseudouridine from uracil-55 in the psi GC loop of transfer RNAs. In Streptococcus thermophilus (strain CNRZ 1066), this protein is tRNA pseudouridine synthase B.